A 445-amino-acid chain; its full sequence is Nuclear hormone receptor family member nhr-1 (445 aa).

Residues 19–55 (PMVNSQRNEDPSMYMNGSAASVSHTNGSSSMGNDQKF) form a disordered region. Polar residues predominate over residues 36-51 (SAASVSHTNGSSSMGN). The nuclear receptor DNA-binding region spans 70 to 145 (GELCAVCSDL…VGMDAKALQI (76 aa)). NR C4-type zinc fingers lie at residues 73 to 93 (CAVCSDLATGYHYGVASCNGC) and 109 to 133 (CQYNGNCDVNKNIRCACRHCRFNKC). Residues 179–444 (QDQEIIDQLT…PFVKELCMKR (266 aa)) enclose the NR LBD domain.

Belongs to the nuclear hormone receptor family.

Its subcellular location is the nucleus. Orphan nuclear receptor which acts in concert with the insulin/IGF-1-like signaling (IIS) pathway during osmotic stress, perhaps in response to a ligand modified by the sulfotransferase ssu-1. The protein is Nuclear hormone receptor family member nhr-1 (nhr-1) of Caenorhabditis elegans.